The sequence spans 116 residues: Fluoride-specific ion channel FluC 2 (116 aa).

Transmembrane regions (helical) follow at residues 3 to 23 and 43 to 63; these read LLTALAVGAGGAAGAVARYAV and LLFGVAIGADFGGAPAVAVTV. Gly-67 and Thr-70 together coordinate Na(+). Residues 96-116 form a helical membrane-spanning segment; sequence VGTLAAALLAVFLGIALGAAL.

The protein belongs to the fluoride channel Fluc/FEX (TC 1.A.43) family.

The protein localises to the cell membrane. It catalyses the reaction fluoride(in) = fluoride(out). Na(+) is not transported, but it plays an essential structural role and its presence is essential for fluoride channel function. Fluoride-specific ion channel. Important for reducing fluoride concentration in the cell, thus reducing its toxicity. The protein is Fluoride-specific ion channel FluC 2 of Natronomonas pharaonis (strain ATCC 35678 / DSM 2160 / CIP 103997 / JCM 8858 / NBRC 14720 / NCIMB 2260 / Gabara) (Halobacterium pharaonis).